A 159-amino-acid chain; its full sequence is Phosphopantetheine adenylyltransferase (159 aa).

Thr9 contributes to the substrate binding site. ATP contacts are provided by residues 9 to 10 and His17; that span reads TF. Positions 41, 73, and 87 each coordinate substrate. ATP-binding positions include 88–90, Glu98, and 123–129; these read GLR and YSFISST.

The protein belongs to the bacterial CoaD family. In terms of assembly, homohexamer. Mg(2+) is required as a cofactor.

The protein resides in the cytoplasm. The enzyme catalyses (R)-4'-phosphopantetheine + ATP + H(+) = 3'-dephospho-CoA + diphosphate. It participates in cofactor biosynthesis; coenzyme A biosynthesis; CoA from (R)-pantothenate: step 4/5. Functionally, reversibly transfers an adenylyl group from ATP to 4'-phosphopantetheine, yielding dephospho-CoA (dPCoA) and pyrophosphate. This chain is Phosphopantetheine adenylyltransferase, found in Pseudomonas syringae pv. tomato (strain ATCC BAA-871 / DC3000).